The chain runs to 477 residues: Aspartyl/glutamyl-tRNA(Asn/Gln) amidotransferase subunit B (477 aa).

The protein belongs to the GatB/GatE family. GatB subfamily. Heterotrimer of A, B and C subunits.

It catalyses the reaction L-glutamyl-tRNA(Gln) + L-glutamine + ATP + H2O = L-glutaminyl-tRNA(Gln) + L-glutamate + ADP + phosphate + H(+). The catalysed reaction is L-aspartyl-tRNA(Asn) + L-glutamine + ATP + H2O = L-asparaginyl-tRNA(Asn) + L-glutamate + ADP + phosphate + 2 H(+). Functionally, allows the formation of correctly charged Asn-tRNA(Asn) or Gln-tRNA(Gln) through the transamidation of misacylated Asp-tRNA(Asn) or Glu-tRNA(Gln) in organisms which lack either or both of asparaginyl-tRNA or glutaminyl-tRNA synthetases. The reaction takes place in the presence of glutamine and ATP through an activated phospho-Asp-tRNA(Asn) or phospho-Glu-tRNA(Gln). This chain is Aspartyl/glutamyl-tRNA(Asn/Gln) amidotransferase subunit B, found in Legionella pneumophila (strain Paris).